We begin with the raw amino-acid sequence, 281 residues long: 2-dehydro-3-deoxyphosphooctonate aldolase (281 aa).

This sequence belongs to the KdsA family.

It localises to the cytoplasm. The catalysed reaction is D-arabinose 5-phosphate + phosphoenolpyruvate + H2O = 3-deoxy-alpha-D-manno-2-octulosonate-8-phosphate + phosphate. Its pathway is carbohydrate biosynthesis; 3-deoxy-D-manno-octulosonate biosynthesis; 3-deoxy-D-manno-octulosonate from D-ribulose 5-phosphate: step 2/3. The protein operates within bacterial outer membrane biogenesis; lipopolysaccharide biosynthesis. This Acidithiobacillus ferrooxidans (strain ATCC 23270 / DSM 14882 / CIP 104768 / NCIMB 8455) (Ferrobacillus ferrooxidans (strain ATCC 23270)) protein is 2-dehydro-3-deoxyphosphooctonate aldolase.